The chain runs to 131 residues: Glutaredoxin arsenate reductase (131 aa).

Catalysis depends on nucleophile residues Cys-8 and Cys-80. Cystine bridges form between Cys-8–Cys-80 and Cys-80–Cys-82.

This sequence belongs to the low molecular weight phosphotyrosine protein phosphatase family. Homodimer.

It catalyses the reaction O-phospho-L-tyrosyl-[protein] + H2O = L-tyrosyl-[protein] + phosphate. The enzyme catalyses [glutaredoxin]-dithiol + arsenate + glutathione + H(+) = glutathionyl-S-S-[glutaredoxin] + arsenite + H2O. In terms of biological role, reduces arsenate [As(V)] to arsenite [As(III)] using glutathione and glutaredoxin as sources of reducing equivalents. GrxA is the most effective electron donor in vivo compared to other glutaredoxins. Constitutes the major arsenate reductase compared to ArsI1 and ArsI2. Also shows weak phosphatase activity toward p-nitrophenyl phosphate. The chain is Glutaredoxin arsenate reductase (arsC) from Synechocystis sp. (strain ATCC 27184 / PCC 6803 / Kazusa).